The sequence spans 1707 residues: MESTQVIDWDAEEEEETELSSGSLGYSVEPIGQLRLFSGTHGPERDFPLYLGKNVVGRSPDCSVALPFPSISKQHAVIEISAWNKAPILQDCGSLNGTQIVKPPRVLPPGVSHRLRDQELILFADFPCQYHRLDVPPPLVPRSLLTIEKTPRIRIESQNSRVLLAADSEEEGDFPSGRCVANGQRNTASPSATVVPESDEEVSSPAPSVPGPSSPFGLGSDTDEEQGQQPGVEESSLADSSGAAGEAEQPEANGTTAGIQAQPTEHKLKDTKVKKEAGRAGVSDGSVLERSPTLGEDSDTEVDEDHKPGFADSETDVEEERIPVTPPVAPVKKNQVLLAVGIGDPEAPGVAHLQDCLAGSGTDVEDKTALDVPLERNHTPMVINSDTDEEEEEEEEVSAALTLAHLKERGIGLWSRDPGAEEVKSQPQVLVEQSQSASGRDSDTDVEEESSGRKREIIPDSPMDVDEALTVTQPESQPPRRPNDADEYMDMSSPGSHLVVNQASFAVVGKTRAQVEEEVPGPSVILGEKHQVPLEGAQPPEEAWETAVQEGSSSPEAAASVRPSQQPVAEDAGTECATAVSEQESTLEVRSQSGSPAAPVEQVVIHTDTSGDPTLPQREGAQTPTGREREAHVGRTKSAKECCDAEPEDLCLPATQCFVEGESQHPEAVQSLENEPTQLFPCTLPQEPGPSHLSLQTPGADTLDVPWEVLATQPFCLREQSETSELHEAHGSQPSLPREPPGHQHLVHTSPVHTELLRIEGREIQTVEKAMGIPKEMADRMTPEREPLEREIRGRTENSERDVIGEELIQGTKDREPKKVLARDSQRKEADKDLEGNRESLEVEIEMSKDSQKRERKVEKPEPKREWEPADLEVTPDRGVTEEGSHDQKGQIASLTLKPGVGVKDLEGLASAPIITGSQADGGKGDPLSPGRQQRGRLSCQTTPAGKASRGDPEPPDHCLFSSVPEASTQSLLTSQSQKQSTPQPLFSTSSSEIPLPESLHTKPNVRPRRSSRMTPSPHSSAALKPNTTCPTNQPAASRPTSRPTRGRANRSSTRTPELIVPVDPELQPSTSTEQPVIPKLTSQVTEGRVQMPEPLLTGPEIQSPTSTEQSVTPDRKPRATRGRPSKSPNKTPEPLISTGPELQPPTSIEQPVIPKPTSRVTRGRPRKSSVRTPESVVSTGPELQPLTSIEQPVIPEPRATRGRPSKSSIKTPESVVPTGPELQPLTSAKQPVTPNLTSRASRGRSSKSIRTPEPVVQTGPEFHPSTSTEQPDTREPSSQARTRRSAVKTPEASVPTTPELQPFTSKKQPAPKPTALVTQGRTYKPSTEDCESVGPVAPDFEPSTSTDHLVTPKVTDQSLTLQSSPLSASPVSSTPDLKPPVPIAQPVTPEPIPQANHQRKRRAAGKQGSRTVPLGHKSYSALSEPEPQSSASQSSGASEADSPRQKRPRRQASQKTVVIKEEPVETEVKEEPQETAIPTPEKRKRDHAEEVTQGKPTRSRRTKPNQETAPKVLFTGVMDSRGERAVLALGGSLASSVNEASHLVTDRIRRTVKFLCALGKGIPILSLNWLYQSRKAGCFLPPDDYLVTDPEQEKNFSFSLRDSLCRARERRLLEDYEIHVTPGVQPPPPQMGEIISCCGGTFLPSMPHSYKLHRVIITCTEDLPRCAIPSRLGLPLLSPEFLLTGVLKQEATPEAFVLSNLEMSST.

Residues Met-1–Ser-23 are disordered. Residues Met-1–Thr-150 are interaction with CHEK2. Residues Glu-2–Thr-222 form an interaction with the MRN complex region. The residue at position 4 (Thr-4) is a Phosphothreonine. Residues Trp-9 to Glu-18 are compositionally biased toward acidic residues. The 52-residue stretch at Asn-54–Arg-105 folds into the FHA domain. The residue at position 146 (Thr-146) is a Phosphothreonine. Residues Ala-166–Val-328 are disordered. Phosphoserine is present on residues Ser-168 and Ser-176. Polar residues predominate over residues Gly-183–Ala-192. Phosphoserine occurs at positions 198 and 220. A Phosphothreonine modification is found at Thr-222. Polar residues predominate over residues Ala-252–Pro-263. Over residues Thr-264–Gly-278 the composition is skewed to basic and acidic residues. Ser-298 carries the post-translational modification Phosphoserine. Thr-300 carries the phosphothreonine modification. Position 313 is a phosphoserine (Ser-313). At Thr-315 the chain carries Phosphothreonine. Ser-360 carries the phosphoserine modification. Thr-362 bears the Phosphothreonine mark. Residues Ala-369–His-378 show a composition bias toward basic and acidic residues. The tract at residues Ala-369 to Ser-398 is disordered. Position 385 is a phosphoserine (Ser-385). Over residues Asp-386 to Val-397 the composition is skewed to acidic residues. Position 387 is a phosphothreonine (Thr-387). A phosphoserine mark is found at Ser-398, Ser-415, Ser-425, Ser-438, and Ser-442. Disordered stretches follow at residues Asp-417 to His-497, Pro-520 to Cys-642, Leu-679 to Gly-699, and Arg-718 to Leu-746. Residues Ser-425–Gly-439 are compositionally biased toward polar residues. Thr-444 is modified (phosphothreonine). Phosphoserine is present on Ser-461. Phosphothreonine is present on Thr-470. A phosphoserine mark is found at Ser-492, Ser-493, Ser-591, Ser-593, and Ser-595. A compositionally biased stretch (polar residues) spans Val-580 to Ser-595. Basic and acidic residues predominate over residues Gly-626–Cys-642. Basic and acidic residues predominate over residues Glu-719 to His-730. A phosphoserine mark is found at Ser-735 and Ser-750. Lys-769 bears the N6-acetyllysine mark. Composition is skewed to basic and acidic residues over residues Ala-778–Ile-804, Thr-812–Glu-868, and Thr-875–Lys-889. Disordered stretches follow at residues Ala-778–Pro-899 and Ile-914–Ala-1510. Phosphoserine occurs at positions 885, 929, and 962. Residues Ser-968–Leu-986 show a composition bias toward low complexity. Ser-991 carries the phosphoserine modification. Composition is skewed to polar residues over residues Pro-1026–Thr-1056, Gln-1068–Thr-1086, and Glu-1101–Thr-1113. Thr-1056 is subject to Phosphothreonine. Phosphoserine is present on residues Ser-1104, Ser-1126, and Ser-1128. Residues Thr-1132, Thr-1173, and Thr-1234 each carry the phosphothreonine modification. Polar residues-rich tracts occupy residues Pro-1225–Ala-1241, Pro-1265–Ala-1281, Val-1295–Lys-1308, and Leu-1317–Pro-1326. 2 positions are modified to phosphothreonine: Thr-1297 and Thr-1298. Position 1327 is a phosphoserine (Ser-1327). Residues Pro-1343–Gln-1363 are compositionally biased toward polar residues. Thr-1352 carries the phosphothreonine modification. Phosphoserine is present on Ser-1359. The span at Ser-1364–Pro-1376 shows a compositional bias: low complexity. Thr-1375 is modified (phosphothreonine). Positions Leu-1378–Ile-1393 are enriched in pro residues. A Glycyl lysine isopeptide (Lys-Gly) (interchain with G-Cter in SUMO2) cross-link involves residue Lys-1418. Positions Ser-1421 to Ala-1441 are enriched in low complexity. Residues Ser-1435, Ser-1436, Ser-1439, and Ser-1443 each carry the phosphoserine modification. The span at Val-1459–Pro-1473 shows a compositional bias: basic and acidic residues. A Glycyl lysine isopeptide (Lys-Gly) (interchain with G-Cter in SUMO1); alternate cross-link involves residue Lys-1461. Lys-1461 participates in a covalent cross-link: Glycyl lysine isopeptide (Lys-Gly) (interchain with G-Cter in SUMO2); alternate. Thr-1480 is subject to Phosphothreonine. Positions Pro-1481–Thr-1493 are enriched in basic and acidic residues. Position 1496 is an N6-acetyllysine (Lys-1496). 2 BRCT domains span residues Ala-1510–Val-1588 and Arg-1609–Ser-1700.

As to quaternary structure, homodimer. Interacts with H2AX, which requires phosphorylation of H2AX on 'Ser-139'. Interacts with the MRN complex, composed of MRE11, RAD50, and NBN. Interacts with CHEK2, which requires ATM-mediated phosphorylation of 'Thr-68' within the FHA domain of CHEK2. Interacts constitutively with the BRCA1-BARD1 complex, SMC1A and TP53BP1. Interacts with ATM and FANCD2, and these interactions are reduced upon DNA damage. Also interacts with the PRKDC complex, composed of XRCC6/KU70, XRCC5/KU80 and PRKDC/XRCC7. This interaction may be required for PRKDC autophosphorylation, which is essential for DNA double strand break (DSB) repair. When phosphorylated by ATM, interacts with RNF8 (via FHA domain). Interacts with CEP164. When phosphorylated, interacts with APTX (via FHA-like domain). Interacts (when phosphorylated) with TOPBP1; promoting TOPBP1 localization to DNA damage sites during mitosis. Interacts (when phosphorylated) with NBN; promoting NBN and MRN complex localization to DNA damage sites. Phosphorylated upon exposure to ionizing radiation (IR), ultraviolet radiation (UV), and hydroxyurea (HU). Phosphorylation in response to IR requires ATM, NBN, and possibly CHEK2. Also phosphorylated during the G2/M phase of the cell cycle and during activation of the mitotic spindle checkpoint. Phosphorylation at Thr-4 by ATM stabilizes and enhances homodimerization via the FHA domain. Phosphorylated at Ser-168 and Ser-198 by CK2 in response to DNA damage during mitosis, promoting interaction with TOPBP1. Phosphorylated by CK2 in response to DNA damage, promoting interaction with NBN and recruitment of the MRN complex to DNA damage sites. Post-translationally, sumoylation at Lys-1461 by PIAS4 following DNA damage promotes ubiquitin-mediated degradation. In terms of processing, ubiquitinated by RNF4, leading to proteasomal degradation; undergoes 'Lys-48'-linked polyubiquitination.

The protein resides in the nucleus. The protein localises to the chromosome. In terms of biological role, histone reader protein required for checkpoint-mediated cell cycle arrest in response to DNA damage within both the S phase and G2/M phases of the cell cycle. Specifically recognizes and binds histone H2AX phosphorylated at 'Ser-139', a marker of DNA damage, serving as a scaffold for the recruitment of DNA repair and signal transduction proteins to discrete foci of DNA damage sites. Also required for downstream events subsequent to the recruitment of these proteins. These include phosphorylation and activation of the ATM, CHEK1 and CHEK2 kinases, and stabilization of TP53/p53 and apoptosis. ATM and CHEK2 may also be activated independently by a parallel pathway mediated by TP53BP1. Required for chromosomal stability during mitosis by promoting recruitment of TOPBP1 to DNA double strand breaks (DSBs): TOPBP1 forms filamentous assemblies that bridge MDC1 and tether broken chromosomes during mitosis. Required for the repair of DSBs via homologous recombination by promoting recruitment of NBN component of the MRN complex to DSBs. This is Mediator of DNA damage checkpoint protein 1 (Mdc1) from Mus musculus (Mouse).